Consider the following 105-residue polypeptide: Small ribosomal subunit protein eS24 (105 aa).

The disordered stretch occupies residues 85 to 105 (SVIAKNEEPEEEPEEEAEDAE). Over residues 92–105 (EPEEEPEEEAEDAE) the composition is skewed to acidic residues.

This sequence belongs to the eukaryotic ribosomal protein eS24 family.

This is Small ribosomal subunit protein eS24 from Methanosphaera stadtmanae (strain ATCC 43021 / DSM 3091 / JCM 11832 / MCB-3).